The primary structure comprises 427 residues: Cysteate synthase (427 aa).

An N6-(pyridoxal phosphate)lysine modification is found at K104. Residues N130 and T382 each coordinate pyridoxal 5'-phosphate.

This sequence belongs to the threonine synthase family. Cysteate synthase subfamily. Homotrimer. The cofactor is pyridoxal 5'-phosphate.

The enzyme catalyses O-phospho-L-serine + sulfite + H(+) = L-cysteate + phosphate. The protein operates within cofactor biosynthesis; coenzyme M biosynthesis. Functionally, specifically catalyzes the beta-elimination of phosphate from L-phosphoserine and the beta-addition of sulfite to the dehydroalanine intermediate to produce L-cysteate. The sequence is that of Cysteate synthase from Methanocella paludicola (strain DSM 17711 / JCM 13418 / NBRC 101707 / SANAE).